Here is a 1394-residue protein sequence, read N- to C-terminus: DNA-directed RNA polymerase subunit beta' (1394 aa).

4 residues coordinate Zn(2+): Cys70, Cys72, Cys85, and Cys88. Asp470, Asp472, and Asp474 together coordinate Mg(2+). Zn(2+)-binding residues include Cys815, Cys889, Cys896, and Cys899.

It belongs to the RNA polymerase beta' chain family. The RNAP catalytic core consists of 2 alpha, 1 beta, 1 beta' and 1 omega subunit. When a sigma factor is associated with the core the holoenzyme is formed, which can initiate transcription. It depends on Mg(2+) as a cofactor. The cofactor is Zn(2+).

It catalyses the reaction RNA(n) + a ribonucleoside 5'-triphosphate = RNA(n+1) + diphosphate. Functionally, DNA-dependent RNA polymerase catalyzes the transcription of DNA into RNA using the four ribonucleoside triphosphates as substrates. The protein is DNA-directed RNA polymerase subunit beta' of Anaeromyxobacter dehalogenans (strain 2CP-C).